A 496-amino-acid chain; its full sequence is GTPase Der (496 aa).

EngA-type G domains lie at 3 to 168 (PIIA…VPEK) and 210 to 383 (IKLA…DCST). GTP is bound by residues 9-16 (GRPNVGKS), 56-60 (DTGGI), 120-123 (NKID), 216-223 (GRPNVGKS), 263-267 (DTAGV), and 328-331 (NKWD). The region spanning 384 to 468 (KRINTSLLTR…PIRIQFKESE (85 aa)) is the KH-like domain.

The protein belongs to the TRAFAC class TrmE-Era-EngA-EngB-Septin-like GTPase superfamily. EngA (Der) GTPase family. Associates with the 50S ribosomal subunit.

Functionally, GTPase that plays an essential role in the late steps of ribosome biogenesis. The protein is GTPase Der of Hamiltonella defensa subsp. Acyrthosiphon pisum (strain 5AT).